Here is a 377-residue protein sequence, read N- to C-terminus: Sodium-dependent organic anion transporter (377 aa).

At 1-29 (MRANCSSSSACPANSSEEELPVGLEVHGN) the chain is on the extracellular side. Asn-4 carries N-linked (GlcNAc...) asparagine glycosylation. A helical membrane pass occupies residues 30-50 (LELVFTVVSTVMMGLLMFSLG). Residues 51 to 67 (CSVEIRKLWSHIRRPWG) are Cytoplasmic-facing. A helical transmembrane segment spans residues 68-88 (IAVGLLCQFGLMPFTAYLLAI). Over 89–97 (SFSLKPVQA) the chain is Extracellular. Residues 98-118 (IAVLIMGCCPGGTISNIFTFW) traverse the membrane as a helical segment. The Cytoplasmic portion of the chain corresponds to 119–133 (VDGDMDLSISMTTCS). Residues 134–154 (TVAALGMMPLCIYLYTWSWSL) traverse the membrane as a helical segment. The Extracellular segment spans residues 155–159 (QQNLT). Residue Asn-157 is glycosylated (N-linked (GlcNAc...) asparagine). The helical transmembrane segment at 160-180 (IPYQNIGITLVCLTIPVAFGV) threads the bilayer. Residues 181 to 195 (YVNYRWPKQSKIILK) lie on the Cytoplasmic side of the membrane. A helical transmembrane segment spans residues 196–216 (IGAVVGGVLLLVVAVAGVVLA). Residues 217–226 (KGSWNSDITL) are Extracellular-facing. Residues 227–247 (LTISFIFPLIGHVTGFLLALF) traverse the membrane as a helical segment. The Cytoplasmic segment spans residues 248 to 266 (THQSWQRCRTISLETGAQN). Residues 267-285 (IQMCITMLQLSFTAEHLVQ) form a helical membrane-spanning segment. The Extracellular portion of the chain corresponds to 286–290 (MLSFP). Residues 291 to 311 (LAYGLFQLIDGFLIVAAYQTY) traverse the membrane as a helical segment. The Cytoplasmic portion of the chain corresponds to 312-377 (KRRLKNKHGK…EPVGHITSCE (66 aa)).

Belongs to the bile acid:sodium symporter (BASS) (TC 2.A.28) family. Post-translationally, glycosylated. As to expression, highly expressed in testis, placenta and pancreas. Moderately expressed in heart, lung and mammary gland. Weakly expressed in brain, colon, kidney, liver, ovary, prostate, small intestine, spleen and thymus.

The protein resides in the membrane. It carries out the reaction estrone 3-sulfate(out) + 2 Na(+)(out) = estrone 3-sulfate(in) + 2 Na(+)(in). The catalysed reaction is 17beta-estradiol 3-sulfate(out) + 2 Na(+)(out) = 17beta-estradiol 3-sulfate(in) + 2 Na(+)(in). The enzyme catalyses dehydroepiandrosterone 3-sulfate(out) + 2 Na(+)(out) = dehydroepiandrosterone 3-sulfate(in) + 2 Na(+)(in). It catalyses the reaction androst-5-ene-diol 3-sulfate(out) + 2 Na(+)(out) = androst-5-ene-diol 3-sulfate(in) + 2 Na(+)(in). It carries out the reaction pregnenolone sulfate(out) + 2 Na(+)(out) = pregnenolone sulfate(in) + 2 Na(+)(in). The catalysed reaction is taurolithocholate 3-sulfate(out) + 2 Na(+)(out) = taurolithocholate 3-sulfate(in) + 2 Na(+)(in). The enzyme catalyses androsterone 3alpha-sulfate(out) + 2 Na(+)(out) = androsterone 3alpha-sulfate(in) + 2 Na(+)(in). It catalyses the reaction 5alpha-dihydrotestosterone sulfate(out) + 2 Na(+)(out) = 5alpha-dihydrotestosterone sulfate(in) + 2 Na(+)(in). It carries out the reaction 17beta-estradiol 17-sulfate(out) + 2 Na(+)(out) = 17beta-estradiol 17-sulfate(in) + 2 Na(+)(in). The catalysed reaction is 17alpha-hydroxypregnenolone 3-sulfate(out) + 2 Na(+)(out) = 17alpha-hydroxypregnenolone 3-sulfate(in) + 2 Na(+)(in). The enzyme catalyses epiandrosterone 3-sulfate(out) + 2 Na(+)(out) = epiandrosterone 3-sulfate(in) + 2 Na(+)(in). It catalyses the reaction epitestosterone 17-sulfate(out) + 2 Na(+)(out) = epitestosterone 17-sulfate(in) + 2 Na(+)(in). It carries out the reaction testosterone 17-sulfate(out) + 2 Na(+)(out) = testosterone 17-sulfate(in) + 2 Na(+)(in). The catalysed reaction is 16alpha-hydroxydehydroepiandrosterone 3-sulfate(out) + 2 Na(+)(out) = 16alpha-hydroxydehydroepiandrosterone 3-sulfate(in) + 2 Na(+)(in). Functionally, transports sulfoconjugated steroid hormones from the extracellular compartment into the cytosol in a sodium-dependent manner without hydrolysis. Steroid sulfate hormones are commonly considered to be biologically inactive metabolites, that may be activated by steroid sulfatases into free steroids. May play an important role by delivering sulfoconjugated steroids to specific target cells in reproductive organs. May play a role transporting the estriol precursor 16alpha-hydroxydehydroepiandrosterone 3-sulfate (16a-OH-DHEAS) at the fetal blood vessel endothelium. Can also transport other sulfoconjugated molecules such as taurolithocholic acid-3-sulfate and sulfoconjugated pyrenes. This chain is Sodium-dependent organic anion transporter (SLC10A6), found in Homo sapiens (Human).